Consider the following 244-residue polypeptide: Sperm-egg fusion protein Juno (244 aa).

The first 19 residues, 1 to 19 (MAQWWLILLGLWTVLPSLA), serve as a signal peptide directing secretion. 8 cysteine pairs are disulfide-bonded: cysteine 27–cysteine 55, cysteine 47–cysteine 95, cysteine 56–cysteine 99, cysteine 79–cysteine 166, cysteine 86–cysteine 137, cysteine 126–cysteine 200, cysteine 130–cysteine 180, and cysteine 143–cysteine 160. The interval 62–81 (WEAHLDEPLLFNFSMTHCGL) is important for interaction with IZUMO1. Asparagine 73 carries an N-linked (GlcNAc...) asparagine glycan. Positions 223–244 (SASAPQLSYSITAFSLCLLLHA) are excised as a propeptide.

It belongs to the folate receptor family. In terms of assembly, monomer. Interacts with IZUMO1; the interaction is direct. IZUMO1 and IZUMO1R/JUNO form a complex with 1:1 stoichiometry. Interacts with FCRL3/MAIA; FCRL3/MAIA replaces IZUMO1R/JUNO as IZUMO1 receptor after sperm-egg adhesion, thereby permitting species-specific gamete fusion. Interacts with WDR54. The protein is rapidly cleaved following fertilization, being only weakly detectable in zona-intact fertilized eggs at telophase II and undetectable at the pronuclear stage. Sheding is probably required to block to polyspermy and ensuring egg fusion with a single sperm. As to expression, expressed in the oocyte (at protein level).

Its subcellular location is the cell membrane. It localises to the cell projection. The protein resides in the microvillus membrane. Receptor for IZUMO1 present at the cell surface of oocytes (oolemma), which is essential for species-specific gamete recognition and fertilization. The IZUMO1:IZUMO1R/JUNO interaction is a necessary adhesion event between sperm and egg that is required for fertilization but is not sufficient for cell fusion. The ligand-receptor interaction probably does not act as a membrane 'fusogen'. Does not bind folate. The chain is Sperm-egg fusion protein Juno (Izumo1r) from Rattus norvegicus (Rat).